We begin with the raw amino-acid sequence, 150 residues long: MPIVDSGSVSPLSDAEKNKIRAAWDIVYKNYEKNGVDILVKFFTGTPAAQAFFPKFKGLTTADALKKSSDVRWHAERIINAVNDAVKSMDDTEKMSMKLQELSVKHAQSFYVDRQYFKVLAGIIADTTAPGDAGFEKLMSMICILLSSAY.

The Globin domain occupies 11–150 (PLSDAEKNKI…MICILLSSAY (140 aa)). Heme b contacts are provided by His74 and His106.

It belongs to the globin family. In terms of assembly, monomer.

This chain is Globin-2, found in Mordacia mordax (Southern hemisphere lamprey).